A 513-amino-acid chain; its full sequence is MDSSNAIFKSFLGKAPEWYKICIIAFLVINPLIYFFISPFVAGWALVAEFIFTLSMALKCYPLQPGGLLAIEAVFIGMTSAHHVKEEIMANFEVILLLMFMVAGIYFMKQLLLYVFTKLLIVIHSKKILSLAFCLSATFLSAFLDALTVIAVIISVGTGFYGVYHKVASGNSFEDSTDISNDEKIITNKEILEQFRAFLRSPLMHAAVGSALGGVMTMVGEPQNLIIAGQAEWGFVEFLLRVLPVSLPVLICGVITCLLLEHFKIFGYGARLPRRVWGVLARYNLLKEQRMTQQDRVKMGIQALAGIWLVVGLALHLADVGIIGLTIIIICTAFCGITDEHAIGRSFQEPMPFTALIVVFFTVVAVIVDLKLFEPIISYVLSADPHSQLALFYVFNGLLSMISDNVFVGTVYINEAKTALESAIISREQFDLIAVAINTGTNLPSVATPNGQAAFLFLLTSPFAPLIRLSYGKMLYMALPYTIVLSIIGFLSLEFLLPPLTELMSNWGWIITR.

9 helical membrane-spanning segments follow: residues 21–41 (ICIIAFLVINPLIYFFISPFV), 88–108 (IMANFEVILLLMFMVAGIYFM), 119–139 (LLIVIHSKKILSLAFCLSATF), 243–263 (LPVSLPVLICGVITCLLLEHF), 299–318 (MGIQALAGIWLVVGLALHLA), 322–344 (IIGLTIIIICTAFCGITDEHAIG), 350–370 (PMPFTALIVVFFTVVAVIVDL), 389–409 (LALFYVFNGLLSMISDNVFVG), and 477–497 (MALPYTIVLSIIGFLSLEFLL).

This sequence belongs to the NhaB Na(+)/H(+) (TC 2.A.34) antiporter family.

Its subcellular location is the cell inner membrane. The enzyme catalyses 2 Na(+)(in) + 3 H(+)(out) = 2 Na(+)(out) + 3 H(+)(in). Its function is as follows. Na(+)/H(+) antiporter that extrudes sodium in exchange for external protons. This is Na(+)/H(+) antiporter NhaB from Actinobacillus pleuropneumoniae serotype 5b (strain L20).